Reading from the N-terminus, the 451-residue chain is Phosphoglucosamine mutase (451 aa).

Residue Ser104 is the Phosphoserine intermediate of the active site. Positions 104, 249, 251, and 253 each coordinate Mg(2+). Phosphoserine is present on Ser104.

This sequence belongs to the phosphohexose mutase family. Mg(2+) is required as a cofactor. In terms of processing, activated by phosphorylation.

It catalyses the reaction alpha-D-glucosamine 1-phosphate = D-glucosamine 6-phosphate. Catalyzes the conversion of glucosamine-6-phosphate to glucosamine-1-phosphate. The sequence is that of Phosphoglucosamine mutase from Psychrobacter sp. (strain PRwf-1).